Here is a 462-residue protein sequence, read N- to C-terminus: GTPase Der (462 aa).

2 EngA-type G domains span residues 2-164 (KKIA…PKKE) and 195-366 (INVA…KNYS). GTP is bound by residues 8–15 (GKPNVGKS), 55–59 (DTGGI), 116–119 (NKID), 201–208 (GRVNVGKS), 248–252 (DTAGI), and 312–315 (NKWD). Residues 367 to 451 (TWLPTGQLNR…PIILRPRKRG (85 aa)) enclose the KH-like domain.

This sequence belongs to the TRAFAC class TrmE-Era-EngA-EngB-Septin-like GTPase superfamily. EngA (Der) GTPase family. In terms of assembly, associates with the 50S ribosomal subunit.

Functionally, GTPase that plays an essential role in the late steps of ribosome biogenesis. This is GTPase Der from Nitratiruptor sp. (strain SB155-2).